The following is a 456-amino-acid chain: Cytochrome P450 monooxygenase avaH (456 aa).

Residues 243 to 263 form a helical membrane-spanning segment; the sequence is LMSYFVSVFLVNVALFNAVSI. Position 403 (Cys403) interacts with heme.

Belongs to the cytochrome P450 family. Heme serves as cofactor.

The protein localises to the membrane. It functions in the pathway secondary metabolite biosynthesis. In terms of biological role, cytochrome P450 monooxygenase; part of the cluster that mediates the biosynthesis of a highly modified cyclo-arginine-tryptophan dipeptide (cRW). The first step of the pathway is perfornmed by the arginine-containing cyclodipeptide synthase (RCPDS) avaA that acts as the scaffold-generating enzyme and is responsible for formation of the cyclo-Arg-Trp (cRW) diketopiperazine. AvaB then acts as a multifunctional flavoenzyme that is responsible for generating the cyclo-Arg-formylkynurenine DKP, which can be deformylated by avaC. AvaB then further catalyzes an additional N-oxidation followed by cyclization and dehydration. The next step is an N-acetylation of the guanidine group catalyzed by the arginine N-acetyltransferase avaD. The roles of the additional enzymes identified within the ava cluster still have to be determined. The chain is Cytochrome P450 monooxygenase avaH from Aspergillus versicolor.